An 841-amino-acid polypeptide reads, in one-letter code: Toll-like receptor 4 (841 aa).

Residues 1 to 23 (MIPRIRLAVATIPAMAFLSCLRS) form the signal peptide. At 24 to 632 (ESWDPCVQVV…FRNATCQISE (609 aa)) the chain is on the extracellular side. The cysteines at positions 29 and 40 are disulfide-linked. Asparagine 35 is a glycosylation site (N-linked (GlcNAc...) asparagine). 7 LRR repeats span residues 55-76 (SVKI…SFSS), 79-100 (ELQV…AYQG), 103-124 (YLST…AFSG), 127-148 (SLQK…PIGH), 151-172 (TLNE…EYFS), 176-197 (NLEH…HLQV), and 205-225 (NLSL…AFNK). N-linked (GlcNAc...) asparagine glycans are attached at residues asparagine 205, asparagine 238, asparagine 282, and asparagine 309. A disulfide bond links cysteine 281 and cysteine 306. LRR repeat units follow at residues 374-395 (NLQF…SHNE), 400-422 (KLKH…MGLE), 423-444 (QLEY…SIFL), 448-469 (NLHY…IFAG), 472-495 (SLQT…FTDL), 497-518 (NLIL…AFHS), 521-542 (RLQV…PYKP), and 545-568 (SLRI…QHLP). A disulfide bridge connects residues cysteine 390 and cysteine 391. A glycan (N-linked (GlcNAc...) asparagine) is linked at asparagine 526. N-linked (GlcNAc...) asparagine glycosylation occurs at asparagine 575. The region spanning 579-630 (NDFSCACEHQTFLQWVKDQKQLLVGAEQMVCTQPLEMQDLPVLSFRNATCQI) is the LRRCT domain. 2 cysteine pairs are disulfide-bonded: cysteine 583–cysteine 609 and cysteine 585–cysteine 628. The N-linked (GlcNAc...) asparagine glycan is linked to asparagine 625. Residues 633-653 (AVISASVLTFLLVSVAGILVY) form a helical membrane-spanning segment. Residues 654–841 (KFYFHLLLFV…SNQHDTTAFT (188 aa)) are Cytoplasmic-facing. The TIR domain maps to 673-816 (STYDAFVIYS…IFWRRLKKAL (144 aa)).

This sequence belongs to the Toll-like receptor family. In terms of assembly, belongs to the lipopolysaccharide (LPS) receptor, a multi-protein complex containing at least CD14, LY96 and TLR4. Binding to bacterial LPS leads to homodimerization. Interacts with LY96 via the extracellular domain. Interacts with MYD88 and TIRAP via their respective TIR domains. Interacts with NOX4. Interacts with CNPY3 and HSP90B1; this interaction is required for proper folding in the endoplasmic reticulum. Interacts with MAP3K21; this interaction leads to negative regulation of TLR4 signaling. Interacts with CD36, following CD36 stimulation by oxLDL or amyloid-beta 42, and forms a heterodimer with TLR6. The trimeric complex is internalized and triggers inflammatory response. LYN kinase activity facilitates TLR4-TLR6 heterodimerization and signal initiation. Interacts with TICAM1 in response to LPS in a WDFY1-dependent manner. Interacts with WDFY1 in response to LPS. Interacts with SMPDL3B. Interacts with CEACAM1; upon lipopolysaccharide stimulation, forms a complex including TLR4 and the phosphorylated form of SYK and CEACAM1, which in turn, recruits PTPN6 that dephosphorylates SYK, reducing the production of reactive oxygen species (ROS) and lysosome disruption, which in turn, reduces the activity of the inflammasome. Interacts with RFTN1; the interaction occurs in response to lipopolysaccharide stimulation. Interacts with SCIMP; the interaction occurs in response to lipopolysaccharide stimulation and is enhanced by phosphorylation of SCIMP by LYN. This interaction facilitates the phosphorylation of TLR4 by LYN which elicits a selective cytokine response in macrophages. Interacts with TRAF3IP3. Interacts with TREM1; this interaction enhances TLR4-mediated inflammatory response. Interacts with ZG16B/PAUF. Interacts with CD82; this interaction inhibits TLR4-mediated signaling pathway. Phosphorylated on tyrosine residues by LYN after binding lipopolysaccharide. Post-translationally, ubiquitinated by RNF128 via 'Lys-28'-linked polyubiquitin chains, leading to proteasomal degradation.

It localises to the cell membrane. It is found in the early endosome. The protein resides in the cell projection. Its subcellular location is the ruffle. Its function is as follows. Transmembrane receptor that functions as a pattern recognition receptor recognizing pathogen- and damage-associated molecular patterns (PAMPs and DAMPs) to induce innate immune responses via downstream signaling pathways. At the plasma membrane, cooperates with LY96 to mediate the innate immune response to bacterial lipopolysaccharide (LPS). Also involved in LPS-independent inflammatory responses triggered by free fatty acids, such as palmitate, and Ni(2+). Mechanistically, acts via MYD88, TIRAP and TRAF6, leading to NF-kappa-B activation, cytokine secretion and the inflammatory response. Alternatively, CD14-mediated TLR4 internalization via endocytosis is associated with the initiation of a MYD88-independent signaling via the TICAM1-TBK1-IRF3 axis leading to type I interferon production. In addition to the secretion of proinflammatory cytokines, initiates the activation of NLRP3 inflammasome and formation of a positive feedback loop between autophagy and NF-kappa-B signaling cascade. In complex with TLR6, promotes inflammation in monocytes/macrophages by associating with TLR6 and the receptor CD86. Upon ligand binding, such as oxLDL or amyloid-beta 42, the TLR4:TLR6 complex is internalized and triggers inflammatory response, leading to NF-kappa-B-dependent production of CXCL1, CXCL2 and CCL9 cytokines, via MYD88 signaling pathway, and CCL5 cytokine, via TICAM1 signaling pathway. In myeloid dendritic cells, vesicular stomatitis virus glycoprotein G but not LPS promotes the activation of IRF7, leading to type I IFN production in a CD14-dependent manner. In Sus scrofa (Pig), this protein is Toll-like receptor 4 (TLR4).